The chain runs to 950 residues: MGLAGFARPLQWFKSQWLWLLLSIAAFWLLMRVQVEWLWFGQFDWQGMLLRRWLWQLGGLLLALLVVATCQLWQRNWIKLEGASNLAEPALPLHGWRYGLGLLGCFVVVVGDLVLLTRLAWLACFKPFALGHWWSEPFEDIWALVIPLSCVFISICVMLGNARGGRIAHLMGCFCFSISIARGWGLWSLALAIPPTGIKEPLLGADVSFGLGQFPALAFALVVLLAQLVLTTSTTIWMKLAQPESLSDWVFKGLSPRQCDVMRPLIGIILLTLSALLWLSRHELLWTQNGTVAGAGWLDAHLILPLRSLASLAILVLAFLVIPFPWIQQRRLWRLIASIIGVGAILLEVLLAPFVQWMVVKPRELKLETPYIIRAIKATRKAFQLDSITTTLINPQPQLTQLDLEQGASTLRNIRLWDSQPLLATNRQLQQLRVYYRFSNAAVDRYRFVPDKANRQQVMITARELDQAALPKRSRTWLNRHFVFTHGYGFTLSPVNTRAPDGLPDYFISDLGTSTRLEGSSELGITREDVKEAVPIGRAALYFGMLPSPYALAPSKLKELDYPVGDKNIYNHYLGSGGVPVGHPWQQLAAAMYLFEPRLLNTGSLTINSKLLIRREVRQRVSAIAPFLEVIGDPYLVSTSVNSRDHDYQAKQNQYWIVEAYTSSRTYPYAANLPDGRPVRYLRNSVKAIVDAYSGRVHLYVSEPRDPIILGWQRLFPDLFKPLEEMPSSLREHLKVPTDLFNVQVQQLLRYHVTDPRIFYSGDDVWQVPKELYGKRQVPVDPYHITAQLGSQESSEFLLLQPLTPLARPNLSAWLAARSDGDHYGKLVLLRFPSQTPIFGPEQIQALINQDPQISQQFGLWDRAGSEVVQGNLLVVPLGKALLYVEPVYLRARQGGLPTLTRVVVSDGKRIAMAEDLGEGLRALVDGSSKKAVYLNRNDLPPIKAADQSN.

9 consecutive transmembrane segments (helical) span residues Leu-20–Phe-40, Trp-53–Trp-73, Leu-102–Leu-122, Ile-141–Asn-161, Cys-173–Ile-193, Phe-209–Val-229, Cys-259–Leu-279, Ser-308–Gln-328, and Leu-335–Val-355.

Belongs to the UPF0182 family.

The protein resides in the cell membrane. The protein is UPF0182 protein P9303_14611 of Prochlorococcus marinus (strain MIT 9303).